Reading from the N-terminus, the 816-residue chain is H(+)/Cl(-) exchange transporter 5 (816 aa).

Residues 1-124 (MAMWQGAMDN…WALIHSVSDA (124 aa)) lie on the Cytoplasmic side of the membrane. A run of 2 helical transmembrane segments spans residues 125-162 (FSGWLLMLLIGLLSGSLAGLIDISAHWMTDLKEGICTG) and 208-231 (VNYFMYVLWALLFAFLAVSLVKVF). Positions 237–241 (GSGIP) match the Selectivity filter part_1 motif. Chloride is bound at residue serine 238. An intramembrane region (helical) is located at residues 240 to 247 (IPEIKTIL). Transmembrane regions (helical) follow at residues 256–275 (LGKWTLVIKTITLVLAVSSG) and 281–300 (EGPLVHVACCCGNILCHCFN). The short motif at 279 to 283 (GKEGP) is the Selectivity filter part_2 element. 2 consecutive intramembrane regions (helical) follow at residues 312-324 (VLSAAAAAGVSVA) and 328-336 (PIGGVLFSL). The next 5 helical transmembrane spans lie at 348–366 (LWRSFFAALVAAFTLRSIN), 389–414 (LVPFILLGIFGGLWGALFIRTNIAWC), 422–442 (LGKYPVIEVLVVTAITAILAF), 498–518 (MWQLALTLILKIVITIFTFGM), and 523–542 (GLFIPSMAVGAIAGRLLGVG). The short motif at 523-527 (GLFIP) is the Selectivity filter part_3 element. Phenylalanine 525 serves as a coordination point for chloride. The segment at residues 570–584 (GLYAMVGAAACLGGV) is an intramembrane region (helical). Residues 585–587 (TRM) constitute an intramembrane region (note=Loop between two helices). The segment at residues 588 to 599 (TVSLVVIMFELT) is an intramembrane region (helical). The segment at residues 600 to 604 (GGLEY) is an intramembrane region (note=Loop between two helices). A helical membrane pass occupies residues 605 to 622 (IVPLMAAAMTSKWVADAL). The Cytoplasmic segment spans residues 623-816 (GREGIYDAHI…NQDPDSILFN (194 aa)). A chloride-binding site is contributed by tyrosine 628. CBS domains are found at residues 656-720 (MKPR…ARKK) and 752-812 (ILDL…DPDS). Residues threonine 666, 687–689 (YSG), and 794–797 (TKKD) contribute to the ATP site.

It belongs to the chloride channel (TC 2.A.49) family. ClC-5/CLCN5 subfamily. As to quaternary structure, interacts with NEDD4 and NEDD4L. In terms of processing, ubiquitinated by NEDD4L in the presence of albumin; which promotes endocytosis and proteasomal degradation.

Its subcellular location is the golgi apparatus membrane. The protein localises to the endosome membrane. The protein resides in the cell membrane. It carries out the reaction 2 chloride(in) + H(+)(out) = 2 chloride(out) + H(+)(in). In terms of biological role, proton-coupled chloride transporter. Functions as antiport system and exchanges chloride ions against protons. Important for normal acidification of the endosome lumen. May play an important role in renal tubular function. The CLC channel family contains both chloride channels and proton-coupled anion transporters that exchange chloride or another anion for protons. The absence of conserved gating glutamate residues is typical for family members that function as channels. This Pongo abelii (Sumatran orangutan) protein is H(+)/Cl(-) exchange transporter 5 (CLCN5).